Reading from the N-terminus, the 437-residue chain is Bifunctional protein GlmU (437 aa).

A pyrophosphorylase region spans residues 1-223; it reads MHNTAVILAA…WDECRGVNSR (223 aa). UDP-N-acetyl-alpha-D-glucosamine contacts are provided by residues 8–11, lysine 22, glutamine 70, 75–76, 96–98, glycine 135, glutamate 149, asparagine 164, and asparagine 221; these read LAAG, GT, and YGD. Residue aspartate 98 coordinates Mg(2+). Asparagine 221 provides a ligand contact to Mg(2+). The segment at 224 to 244 is linker; it reads AELAAAEAAMQSRLRAAALAA. An N-acetyltransferase region spans residues 245–437; that stretch reads GVTMTAPETV…AELRMTKGKR (193 aa). The UDP-N-acetyl-alpha-D-glucosamine site is built by arginine 310 and lysine 328. The active-site Proton acceptor is the histidine 340. UDP-N-acetyl-alpha-D-glucosamine is bound by residues tyrosine 343 and asparagine 354. Acetyl-CoA is bound by residues alanine 357, 363-364, serine 382, alanine 400, and arginine 417; that span reads NY.

It in the N-terminal section; belongs to the N-acetylglucosamine-1-phosphate uridyltransferase family. The protein in the C-terminal section; belongs to the transferase hexapeptide repeat family. As to quaternary structure, homotrimer. Mg(2+) serves as cofactor.

It localises to the cytoplasm. The catalysed reaction is alpha-D-glucosamine 1-phosphate + acetyl-CoA = N-acetyl-alpha-D-glucosamine 1-phosphate + CoA + H(+). It carries out the reaction N-acetyl-alpha-D-glucosamine 1-phosphate + UTP + H(+) = UDP-N-acetyl-alpha-D-glucosamine + diphosphate. It functions in the pathway nucleotide-sugar biosynthesis; UDP-N-acetyl-alpha-D-glucosamine biosynthesis; N-acetyl-alpha-D-glucosamine 1-phosphate from alpha-D-glucosamine 6-phosphate (route II): step 2/2. Its pathway is nucleotide-sugar biosynthesis; UDP-N-acetyl-alpha-D-glucosamine biosynthesis; UDP-N-acetyl-alpha-D-glucosamine from N-acetyl-alpha-D-glucosamine 1-phosphate: step 1/1. It participates in bacterial outer membrane biogenesis; LPS lipid A biosynthesis. Catalyzes the last two sequential reactions in the de novo biosynthetic pathway for UDP-N-acetylglucosamine (UDP-GlcNAc). The C-terminal domain catalyzes the transfer of acetyl group from acetyl coenzyme A to glucosamine-1-phosphate (GlcN-1-P) to produce N-acetylglucosamine-1-phosphate (GlcNAc-1-P), which is converted into UDP-GlcNAc by the transfer of uridine 5-monophosphate (from uridine 5-triphosphate), a reaction catalyzed by the N-terminal domain. The sequence is that of Bifunctional protein GlmU from Acidiphilium cryptum (strain JF-5).